The primary structure comprises 231 residues: Transcriptional regulator NRG1 (231 aa).

Position 163 is a phosphoserine (Ser163). 2 C2H2-type zinc fingers span residues 174–196 (YICKICARGFTTSGHLARHNRIH) and 202–226 (HCCPYKGCTQRFSRHDNCLQHYRTH).

The protein resides in the nucleus. Transcriptional repressor involved in regulation of glucose repression. Binds to UAS-1 in the STA1 promoter. This Saccharomyces cerevisiae (strain ATCC 204508 / S288c) (Baker's yeast) protein is Transcriptional regulator NRG1 (NRG1).